The primary structure comprises 354 residues: uncharacterized protein (354 aa).

A compositionally biased stretch (polar residues) spans 309 to 326; sequence VNSANSINTANTRSQTGG. Residues 309–333 form a disordered region; sequence VNSANSINTANTRSQTGGQDEEDFE. The stretch at 326 to 353 forms a coiled coil; it reads GQDEEDFEKKYKKYKNKYAKLKNQKTSN.

It is found in the virion. This is an uncharacterized protein from Acanthamoeba polyphaga (Amoeba).